Here is a 360-residue protein sequence, read N- to C-terminus: uncharacterized protein (360 aa).

Positions 4–235 (LSLQHIQKIY…PANMFVAGFI (232 aa)) constitute an ABC transporter domain. 37–44 (GPSGCGKS) serves as a coordination point for ATP.

Belongs to the ABC transporter superfamily.

This is an uncharacterized protein from Escherichia coli O6:H1 (strain CFT073 / ATCC 700928 / UPEC).